Reading from the N-terminus, the 130-residue chain is Small ribosomal subunit protein eS6 (130 aa).

Positions 78-98 are disordered; sequence SGPPGFRPERKGERRRKTVRG.

This sequence belongs to the eukaryotic ribosomal protein eS6 family.

The chain is Small ribosomal subunit protein eS6 from Methanopyrus kandleri (strain AV19 / DSM 6324 / JCM 9639 / NBRC 100938).